The chain runs to 585 residues: Arginine--tRNA ligase (585 aa).

A 'HIGH' region motif is present at residues 131-141 (ANPTGPMHVGH).

This sequence belongs to the class-I aminoacyl-tRNA synthetase family. Monomer.

The protein resides in the cytoplasm. It catalyses the reaction tRNA(Arg) + L-arginine + ATP = L-arginyl-tRNA(Arg) + AMP + diphosphate. The chain is Arginine--tRNA ligase from Bartonella tribocorum (strain CIP 105476 / IBS 506).